We begin with the raw amino-acid sequence, 149 residues long: D-aminoacyl-tRNA deacylase (149 aa).

The short motif at 137–138 (GP) is the Gly-cisPro motif, important for rejection of L-amino acids element.

This sequence belongs to the DTD family. In terms of assembly, homodimer.

It is found in the cytoplasm. It catalyses the reaction glycyl-tRNA(Ala) + H2O = tRNA(Ala) + glycine + H(+). The catalysed reaction is a D-aminoacyl-tRNA + H2O = a tRNA + a D-alpha-amino acid + H(+). An aminoacyl-tRNA editing enzyme that deacylates mischarged D-aminoacyl-tRNAs. Also deacylates mischarged glycyl-tRNA(Ala), protecting cells against glycine mischarging by AlaRS. Acts via tRNA-based rather than protein-based catalysis; rejects L-amino acids rather than detecting D-amino acids in the active site. By recycling D-aminoacyl-tRNA to D-amino acids and free tRNA molecules, this enzyme counteracts the toxicity associated with the formation of D-aminoacyl-tRNA entities in vivo and helps enforce protein L-homochirality. This chain is D-aminoacyl-tRNA deacylase, found in Leuconostoc mesenteroides subsp. mesenteroides (strain ATCC 8293 / DSM 20343 / BCRC 11652 / CCM 1803 / JCM 6124 / NCDO 523 / NBRC 100496 / NCIMB 8023 / NCTC 12954 / NRRL B-1118 / 37Y).